Here is a 236-residue protein sequence, read N- to C-terminus: Phosphoserine phosphatase (236 aa).

Aspartate 30 acts as the Nucleophile in catalysis. Mg(2+) is bound by residues aspartate 30 and aspartate 32. Aspartate 32 (proton donor) is an active-site residue. Substrate contacts are provided by residues glutamate 39, arginine 76, 120–121, and lysine 169; that span reads SG. Mg(2+) is bound at residue aspartate 192. Residue asparagine 195 participates in substrate binding.

This sequence belongs to the HAD-like hydrolase superfamily. SerB family. It depends on Mg(2+) as a cofactor.

It carries out the reaction O-phospho-L-serine + H2O = L-serine + phosphate. The catalysed reaction is O-phospho-D-serine + H2O = D-serine + phosphate. The protein operates within amino-acid biosynthesis; L-serine biosynthesis; L-serine from 3-phospho-D-glycerate: step 3/3. The chain is Phosphoserine phosphatase from Polaromonas sp. (strain JS666 / ATCC BAA-500).